The following is a 196-amino-acid chain: MLERIKVCFTESIQTQIAAAEALPDAISRAAMTLVQSLLNGNKILCCGNGTSGANAQHFAASMINRYETERPGLPAIALNTDNVVLTAITNDRLHDEVYAKQVRALGHAGDVLLAISTRGNSRDIVKAVEAAVTRDMTIVALTGYDGGELAGLLGPQDVEIRIPSHRSARIHEMHMLTVNCLCDLIDNTLFPHQDD.

The region spanning Leu34–Asp196 is the SIS domain.

Belongs to the SIS family. DiaA subfamily. As to quaternary structure, homotetramer; dimer of dimers.

Its function is as follows. Required for the timely initiation of chromosomal replication via direct interactions with the DnaA initiator protein. The polypeptide is DnaA initiator-associating protein DiaA (Cronobacter sakazakii (strain ATCC BAA-894) (Enterobacter sakazakii)).